The chain runs to 618 residues: Glutamine--fructose-6-phosphate aminotransferase [isomerizing] (618 aa).

Residue cysteine 2 is the Nucleophile; for GATase activity of the active site. The Glutamine amidotransferase type-2 domain maps to 2–226 (CGIVGYAGRN…DFETAVLSPT (225 aa)). The segment at 69–94 (HTRWATHGRPSTKNAHPHNSGGNPGK) is disordered. 2 consecutive SIS domains span residues 295–434 (SEDE…VRDR) and 467–608 (CAEG…IDKP). Catalysis depends on lysine 613, which acts as the For Fru-6P isomerization activity.

As to quaternary structure, homodimer.

It is found in the cytoplasm. The enzyme catalyses D-fructose 6-phosphate + L-glutamine = D-glucosamine 6-phosphate + L-glutamate. In terms of biological role, catalyzes the first step in hexosamine metabolism, converting fructose-6P into glucosamine-6P using glutamine as a nitrogen source. The chain is Glutamine--fructose-6-phosphate aminotransferase [isomerizing] from Methanosarcina acetivorans (strain ATCC 35395 / DSM 2834 / JCM 12185 / C2A).